Here is a 304-residue protein sequence, read N- to C-terminus: UDP-N-acetylenolpyruvoylglucosamine reductase (304 aa).

The 180-residue stretch at 33 to 212 (MGGLADLFLI…KEMMDDLTHK (180 aa)) folds into the FAD-binding PCMH-type domain. The active site involves Arg176. Catalysis depends on Ser226, which acts as the Proton donor. Glu296 is a catalytic residue.

The protein belongs to the MurB family. The cofactor is FAD.

It is found in the cytoplasm. It catalyses the reaction UDP-N-acetyl-alpha-D-muramate + NADP(+) = UDP-N-acetyl-3-O-(1-carboxyvinyl)-alpha-D-glucosamine + NADPH + H(+). Its pathway is cell wall biogenesis; peptidoglycan biosynthesis. In terms of biological role, cell wall formation. This Exiguobacterium sibiricum (strain DSM 17290 / CCUG 55495 / CIP 109462 / JCM 13490 / 255-15) protein is UDP-N-acetylenolpyruvoylglucosamine reductase.